Here is a 635-residue protein sequence, read N- to C-terminus: Threonine--tRNA ligase (635 aa).

Residues 1-61 (MINISFPDGS…ENDCKLRILT (61 aa)) enclose the TGS domain. The segment at 242-533 (DHRKLGKELD…LIEEYAGCFP (292 aa)) is catalytic. Zn(2+) contacts are provided by Cys-333, His-384, and His-510.

This sequence belongs to the class-II aminoacyl-tRNA synthetase family. Homodimer. The cofactor is Zn(2+).

The protein localises to the cytoplasm. The catalysed reaction is tRNA(Thr) + L-threonine + ATP = L-threonyl-tRNA(Thr) + AMP + diphosphate + H(+). Functionally, catalyzes the attachment of threonine to tRNA(Thr) in a two-step reaction: L-threonine is first activated by ATP to form Thr-AMP and then transferred to the acceptor end of tRNA(Thr). Also edits incorrectly charged L-seryl-tRNA(Thr). This is Threonine--tRNA ligase from Rickettsia akari (strain Hartford).